Here is a 99-residue protein sequence, read N- to C-terminus: Small ribosomal subunit protein bS20 (99 aa).

It belongs to the bacterial ribosomal protein bS20 family.

In terms of biological role, binds directly to 16S ribosomal RNA. This Picosynechococcus sp. (strain ATCC 27264 / PCC 7002 / PR-6) (Agmenellum quadruplicatum) protein is Small ribosomal subunit protein bS20.